We begin with the raw amino-acid sequence, 384 residues long: S-adenosylmethionine synthase (384 aa).

Position 15 (histidine 15) interacts with ATP. Aspartate 17 is a Mg(2+) binding site. Glutamate 43 is a binding site for K(+). Residues glutamate 56 and glutamine 99 each contribute to the L-methionine site. The tract at residues 99–109 (QSPDINQGVDR) is flexible loop. ATP is bound by residues 164-166 (DAK), 230-231 (RF), aspartate 239, 245-246 (RK), alanine 262, and lysine 266. An L-methionine-binding site is contributed by aspartate 239. Residue lysine 270 coordinates L-methionine.

It belongs to the AdoMet synthase family. As to quaternary structure, homotetramer; dimer of dimers. It depends on Mg(2+) as a cofactor. K(+) serves as cofactor.

The protein resides in the cytoplasm. It catalyses the reaction L-methionine + ATP + H2O = S-adenosyl-L-methionine + phosphate + diphosphate. It participates in amino-acid biosynthesis; S-adenosyl-L-methionine biosynthesis; S-adenosyl-L-methionine from L-methionine: step 1/1. In terms of biological role, catalyzes the formation of S-adenosylmethionine (AdoMet) from methionine and ATP. The overall synthetic reaction is composed of two sequential steps, AdoMet formation and the subsequent tripolyphosphate hydrolysis which occurs prior to release of AdoMet from the enzyme. The polypeptide is S-adenosylmethionine synthase (Erwinia tasmaniensis (strain DSM 17950 / CFBP 7177 / CIP 109463 / NCPPB 4357 / Et1/99)).